The primary structure comprises 271 residues: Aminoglycoside N(3)-acetyltransferase III (271 aa).

CoA-binding residues include His-31, Ala-32, Ser-33, Val-34, and Lys-35. 3 residues coordinate a 2-deoxystreptamine antibiotic: Tyr-64, Asp-72, and Glu-102. CoA is bound by residues Ser-104, Val-105, and Phe-109. Residues Glu-123, Tyr-146, and Asp-170 each contribute to the a 2-deoxystreptamine antibiotic site. CoA is bound by residues Thr-171 and Thr-173. Residues His-176, Thr-212, Gly-213, and Phe-221 each coordinate a 2-deoxystreptamine antibiotic.

Belongs to the antibiotic N-acetyltransferase family. Homodimer.

It catalyses the reaction a 2-deoxystreptamine antibiotic + acetyl-CoA = an N(3)-acetyl-2-deoxystreptamine antibiotic + CoA + H(+). Functionally, resistance to antibiotics containing the 2-deoxy-streptamine ring including dibekacin, gentamicin, kanamycin, sisomicin, tobramycin and neomycin, but not to amikacin or netilmicin. Acetylates a broad range of both 4,5- and 4,6-disubstituted aminoglycosides, including neomycin, paromomycin, ribostamycin, sisomicin, gentamicin, tobramycin and kanamycin, with no preference of one disubstitution over the other. Acetylates sisomicin and kanamycin most and least efficiently, respectively. Does not modify plazomicin. The protein is Aminoglycoside N(3)-acetyltransferase III of Pseudomonas aeruginosa.